Reading from the N-terminus, the 174-residue chain is Nucleoside diphosphate kinase (174 aa).

5 residues coordinate ATP: Lys14, Phe62, Arg90, Thr96, and Arg107. Catalysis depends on His123, which acts as the Pros-phosphohistidine intermediate.

The protein belongs to the NDK family. Requires Mg(2+) as cofactor.

It is found in the cytoplasm. It carries out the reaction a 2'-deoxyribonucleoside 5'-diphosphate + ATP = a 2'-deoxyribonucleoside 5'-triphosphate + ADP. The catalysed reaction is a ribonucleoside 5'-diphosphate + ATP = a ribonucleoside 5'-triphosphate + ADP. Functionally, major role in the synthesis of nucleoside triphosphates other than ATP. The ATP gamma phosphate is transferred to the NDP beta phosphate via a ping-pong mechanism, using a phosphorylated active-site intermediate. This chain is Nucleoside diphosphate kinase, found in Thermococcus kodakarensis (strain ATCC BAA-918 / JCM 12380 / KOD1) (Pyrococcus kodakaraensis (strain KOD1)).